Consider the following 240-residue polypeptide: 2,3,4,5-tetrahydropyridine-2,6-dicarboxylate N-acetyltransferase (240 aa).

It belongs to the transferase hexapeptide repeat family. DapH subfamily.

It catalyses the reaction (S)-2,3,4,5-tetrahydrodipicolinate + acetyl-CoA + H2O = L-2-acetamido-6-oxoheptanedioate + CoA. It participates in amino-acid biosynthesis; L-lysine biosynthesis via DAP pathway; LL-2,6-diaminopimelate from (S)-tetrahydrodipicolinate (acetylase route): step 1/3. In terms of biological role, catalyzes the transfer of an acetyl group from acetyl-CoA to tetrahydrodipicolinate. This is 2,3,4,5-tetrahydropyridine-2,6-dicarboxylate N-acetyltransferase from Bacillus cereus (strain AH187).